The following is a 388-amino-acid chain: Galactokinase (388 aa).

32–35 is a binding site for substrate; that stretch reads EHTD. Residues Ser66 and 123–129 contribute to the ATP site; that span reads GASLSSS. Mg(2+) contacts are provided by Ser129 and Glu161. The active-site Proton acceptor is the Asp173. Tyr223 lines the substrate pocket.

This sequence belongs to the GHMP kinase family. GalK subfamily.

It localises to the cytoplasm. It catalyses the reaction alpha-D-galactose + ATP = alpha-D-galactose 1-phosphate + ADP + H(+). It functions in the pathway carbohydrate metabolism; galactose metabolism. Its function is as follows. Catalyzes the transfer of the gamma-phosphate of ATP to D-galactose to form alpha-D-galactose-1-phosphate (Gal-1-P). This chain is Galactokinase, found in Staphylococcus carnosus (strain TM300).